The sequence spans 892 residues: Bifunctional uridylyltransferase/uridylyl-removing enzyme (892 aa).

The tract at residues 1 to 348 (MPNFTGNTRP…LVDAKVHVRP (348 aa)) is uridylyltransferase. The interval 349-710 (INERFQARNG…RIHNQEPGTM (362 aa)) is uridylyl-removing. The 123-residue stretch at 467–589 (VDEHTLFLIH…VGDERRLNHL (123 aa)) folds into the HD domain. ACT domains follow at residues 711–786 (EVFI…LTQP) and 822–892 (VMEL…YLER).

It belongs to the GlnD family. Mg(2+) is required as a cofactor.

It catalyses the reaction [protein-PII]-L-tyrosine + UTP = [protein-PII]-uridylyl-L-tyrosine + diphosphate. The enzyme catalyses [protein-PII]-uridylyl-L-tyrosine + H2O = [protein-PII]-L-tyrosine + UMP + H(+). Its activity is regulated as follows. Uridylyltransferase (UTase) activity is inhibited by glutamine, while glutamine activates uridylyl-removing (UR) activity. Modifies, by uridylylation and deuridylylation, the PII regulatory proteins (GlnB and homologs), in response to the nitrogen status of the cell that GlnD senses through the glutamine level. Under low glutamine levels, catalyzes the conversion of the PII proteins and UTP to PII-UMP and PPi, while under higher glutamine levels, GlnD hydrolyzes PII-UMP to PII and UMP (deuridylylation). Thus, controls uridylylation state and activity of the PII proteins, and plays an important role in the regulation of nitrogen assimilation and metabolism. This is Bifunctional uridylyltransferase/uridylyl-removing enzyme from Nitrosococcus oceani (strain ATCC 19707 / BCRC 17464 / JCM 30415 / NCIMB 11848 / C-107).